A 231-amino-acid polypeptide reads, in one-letter code: 5'-methylthioadenosine/S-adenosylhomocysteine nucleosidase (231 aa).

The active-site Proton acceptor is E12. Substrate-binding positions include G78, V153, and 174–175; that span reads ME. The active-site Proton donor is the D198.

This sequence belongs to the PNP/UDP phosphorylase family. MtnN subfamily.

It catalyses the reaction S-adenosyl-L-homocysteine + H2O = S-(5-deoxy-D-ribos-5-yl)-L-homocysteine + adenine. The catalysed reaction is S-methyl-5'-thioadenosine + H2O = 5-(methylsulfanyl)-D-ribose + adenine. The enzyme catalyses 5'-deoxyadenosine + H2O = 5-deoxy-D-ribose + adenine. It participates in amino-acid biosynthesis; L-methionine biosynthesis via salvage pathway; S-methyl-5-thio-alpha-D-ribose 1-phosphate from S-methyl-5'-thioadenosine (hydrolase route): step 1/2. Catalyzes the irreversible cleavage of the glycosidic bond in both 5'-methylthioadenosine (MTA) and S-adenosylhomocysteine (SAH/AdoHcy) to adenine and the corresponding thioribose, 5'-methylthioribose and S-ribosylhomocysteine, respectively. Also cleaves 5'-deoxyadenosine, a toxic by-product of radical S-adenosylmethionine (SAM) enzymes, into 5-deoxyribose and adenine. The chain is 5'-methylthioadenosine/S-adenosylhomocysteine nucleosidase from Vibrio atlanticus (strain LGP32) (Vibrio splendidus (strain Mel32)).